Here is a 975-residue protein sequence, read N- to C-terminus: MATGLGEPVYGLSEDEGESRILRVKVVSGIDLAKKDIFGASDPYVKLSLYVADENRELALVQTKTIKKTLNPKWNEEFYFRVNPSNHRLLFEVFDENRLTRDDFLGQVDVPLSHLPTEDPTMERPYTFKDFLLRPRSHKSRVKGFLRLKMAYMPKNGGQDEENSDQRDDMEHGWEVVDSNDSASQHQEELPPPPLPPGWEEKVDNLGRTYYVNHNNRTTQWHRPSLMDVSSESDNNIRQINQEAAHRRFRSRRHISEDLEPEPSEGGDVPEPWETISEEVNIAGDSLGLALPPPPASPGSRTSPQELSEELSRRLQITPDSNGEQFSSLIQREPSSRLRSCSVTDAVAEQGHLPPPSAPAGRARSSTVTGGEEPTPSVAYVHTTPGLPSGWEERKDAKGRTYYVNHNNRTTTWTRPIMQLAEDGASGSATNSNNHLIEPQIRRPRSLSSPTVTLSAPLEGAKDSPVRRAVKDTLSNPQSPQPSPYNSPKPQHKVTQSFLPPGWEMRIAPNGRPFFIDHNTKTTTWEDPRLKFPVHMRSKTSLNPNDLGPLPPGWEERIHLDGRTFYIDHNSKITQWEDPRLQNPAITGPAVPYSREFKQKYDYFRKKLKKPADIPNRFEMKLHRNNIFEESYRRIMSVKRPDVLKARLWIEFESEKGLDYGGVAREWFFLLSKEMFNPYYGLFEYSATDNYTLQINPNSGLCNEDHLSYFTFIGRVAGLAVFHGKLLDGFFIRPFYKMMLGKQITLNDMESVDSEYYNSLKWILENDPTELDLMFCIDEENFGQTYQVDLKPNGSEIMVTNENKREYIDLVIQWRFVNRVQKQMNAFLEGFTELLPIDLIKIFDENELELLMCGLGDVDVNDWRQHSIYKNGYCPNHPVIQWFWKAVLLMDAEKRIRLLQFVTGTSRVPMNGFAELYGSNGPQLFTIEQWGSPEKLPRAHTCFNRLDLPPYETFEDLREKLLMAVENAQGFEGVD.

Ala-2 carries the post-translational modification N-acetylalanine. The region spanning 4-126 (GLGEPVYGLS…TEDPTMERPY (123 aa)) is the C2 domain. Disordered regions lie at residues 178–202 (DSND…WEEK), 244–272 (AAHR…VPEP), and 285–312 (DSLG…EELS). The region spanning 193–226 (PPLPPGWEEKVDNLGRTYYVNHNNRTTQWHRPSL) is the WW 1 domain. At Ser-312 the chain carries Phosphoserine. Phosphothreonine is present on Thr-318. Ser-342 is modified (phosphoserine; by WNK1 and WNK4). Disordered stretches follow at residues 349-393 (EQGH…GWEE) and 424-496 (GASG…KVTQ). Residue Thr-367 is modified to Phosphothreonine; by SGK1. The WW 2 domain occupies 385 to 418 (PGLPSGWEERKDAKGRTYYVNHNNRTTTWTRPIM). A Phosphoserine modification is found at Ser-446. The residue at position 448 (Ser-448) is a Phosphoserine; by PKA and SGK1. Phosphoserine; by WNK1 and WNK4 is present on Ser-449. Basic and acidic residues predominate over residues 460-471 (GAKDSPVRRAVK). Residues Ser-464, Ser-475, Ser-479, Ser-483, and Ser-487 each carry the phosphoserine modification. WW domains are found at residues 497–530 (SFLP…DPRL) and 548–581 (GPLP…DPRL). Residues 640–974 (RPDVLKARLW…VENAQGFEGV (335 aa)) form the HECT domain. Cys-942 (glycyl thioester intermediate) is an active-site residue.

As to quaternary structure, interacts with UBE2E3. Interacts with NDFIP1; this interaction activates the E3 ubiquitin-protein ligase. Interacts with NDFIP2; this interaction activates the E3 ubiquitin-protein ligase. Interacts (via WW domains) with SCN1A. Interacts (via WW domains) with SCN2A. Interacts (via WW domains) with SCN3A. Interacts (via WW domains) with SCN5A. Interacts (via WW domains) with SCN8A. Interacts (via WW domains) with SCN9A. Interacts (via WW domains) with SCN10A. Interacts (via WW domains) with CLCN5. Interacts with SMAD2. Interacts with SMAD3. Interacts with SMAD6. Interacts with SMAD7. The phosphorylated form interacts with 14-3-3 proteins. Interacts with TNK2. Interacts with WNK1. Interacts with SGK1. Interacts (via C2 domain) with NPC2. Interacts with ARRDC4. Interacts with KCNQ1; promotes internalization of KCNQ1. Interacts (via domains WW1, 3 and 4) with USP36; the interaction inhibits ubiquitination of, at least, NTRK1, KCNQ2 and KCNQ3 by NEDD4L. Interacts with PRRG4 (via cytoplasmic domain). Interacts with LDLRAD3; the interaction is direct. Interacts with UBE2D2. Interacts with TTYH2 and TTYH3. (Microbial infection) Interacts with Epstein-Barr virus LMP2A. Phosphorylated by SGK1 or PKA; which impairs interaction with SCNN. Interaction with YWHAH inhibits dephosphorylation. In terms of processing, auto-ubiquitinated. Deubiquitinated by USP36, no effect on NEDD4L protein levels. Both proteins interact and regulate each other's ubiquitination levels. As to expression, ubiquitously expressed, with highest levels in prostate, pancreas, and kidney. Expressed in melanocytes.

It is found in the cytoplasm. The protein resides in the golgi apparatus. Its subcellular location is the endosome. It localises to the multivesicular body. It carries out the reaction S-ubiquitinyl-[E2 ubiquitin-conjugating enzyme]-L-cysteine + [acceptor protein]-L-lysine = [E2 ubiquitin-conjugating enzyme]-L-cysteine + N(6)-ubiquitinyl-[acceptor protein]-L-lysine.. The catalysed reaction is [E2 ubiquitin-conjugating enzyme]-S-ubiquitinyl-L-cysteine + [acceptor protein]-L-cysteine = [E2 ubiquitin-conjugating enzyme]-L-cysteine + [acceptor protein]-S-ubiquitinyl-L-cysteine.. The protein operates within protein modification; protein ubiquitination. Activated by NDFIP1- and NDFIP2-binding. Its function is as follows. E3 ubiquitin-protein ligase that mediates the polyubiquitination of lysine and cysteine residues on target proteins and is thereby implicated in the regulation of various signaling pathways including autophagy, innate immunity or DNA repair. Inhibits TGF-beta signaling by triggering SMAD2 and TGFBR1 ubiquitination and proteasome-dependent degradation. Downregulates autophagy and cell growth by ubiquitinating and reducing cellular ULK1 or ASCT2 levels. Promotes ubiquitination and internalization of various plasma membrane channels such as ENaC, SCN2A/Nav1.2, SCN3A/Nav1.3, SCN5A/Nav1.5, SCN9A/Nav1.7, SCN10A/Nav1.8, KCNA3/Kv1.3, KCNH2, EAAT1, KCNQ2/Kv7.2, KCNQ3/Kv7.3 or CLC5. Promotes ubiquitination and degradation of SGK1 and TNK2. Ubiquitinates BRAT1 and this ubiquitination is enhanced in the presence of NDFIP1. Plays a role in dendrite formation by melanocytes. Involved in the regulation of TOR signaling. Ubiquitinates and regulates protein levels of NTRK1 once this one is activated by NGF. Plays a role in antiviral innate immunity by catalyzing 'Lys-29'-linked cysteine ubiquitination of TRAF3, resulting in enhanced 'Lys-48' and 'Lys-63'-linked ubiquitination of TRAF3. Ubiquitinates TTYH2 and TTYH3 and regulates protein levels of TTYH2. This is E3 ubiquitin-protein ligase NEDD4-like from Homo sapiens (Human).